The chain runs to 190 residues: Threonylcarbamoyl-AMP synthase (190 aa).

The 184-residue stretch at 7–190 (LGSIAQAVDV…ALTGERFRQG (184 aa)) folds into the YrdC-like domain.

Belongs to the SUA5 family. TsaC subfamily.

It localises to the cytoplasm. It catalyses the reaction L-threonine + hydrogencarbonate + ATP = L-threonylcarbamoyladenylate + diphosphate + H2O. Functionally, required for the formation of a threonylcarbamoyl group on adenosine at position 37 (t(6)A37) in tRNAs that read codons beginning with adenine. Catalyzes the conversion of L-threonine, HCO(3)(-)/CO(2) and ATP to give threonylcarbamoyl-AMP (TC-AMP) as the acyladenylate intermediate, with the release of diphosphate. This Enterobacter sp. (strain 638) protein is Threonylcarbamoyl-AMP synthase.